Reading from the N-terminus, the 80-residue chain is Exodeoxyribonuclease 7 small subunit (80 aa).

It belongs to the XseB family. In terms of assembly, heterooligomer composed of large and small subunits.

It localises to the cytoplasm. The enzyme catalyses Exonucleolytic cleavage in either 5'- to 3'- or 3'- to 5'-direction to yield nucleoside 5'-phosphates.. Functionally, bidirectionally degrades single-stranded DNA into large acid-insoluble oligonucleotides, which are then degraded further into small acid-soluble oligonucleotides. The protein is Exodeoxyribonuclease 7 small subunit of Vibrio cholerae serotype O1 (strain ATCC 39541 / Classical Ogawa 395 / O395).